Here is a 397-residue protein sequence, read N- to C-terminus: Succinyl-diaminopimelate desuccinylase (397 aa).

H73 contacts Zn(2+). D75 is an active-site residue. D106 contributes to the Zn(2+) binding site. E140 functions as the Proton acceptor in the catalytic mechanism. Zn(2+)-binding residues include E141, E169, and H366.

Belongs to the peptidase M20A family. DapE subfamily. In terms of assembly, homodimer. Requires Zn(2+) as cofactor. It depends on Co(2+) as a cofactor.

The enzyme catalyses N-succinyl-(2S,6S)-2,6-diaminopimelate + H2O = (2S,6S)-2,6-diaminopimelate + succinate. It functions in the pathway amino-acid biosynthesis; L-lysine biosynthesis via DAP pathway; LL-2,6-diaminopimelate from (S)-tetrahydrodipicolinate (succinylase route): step 3/3. Functionally, catalyzes the hydrolysis of N-succinyl-L,L-diaminopimelic acid (SDAP), forming succinate and LL-2,6-diaminopimelate (DAP), an intermediate involved in the bacterial biosynthesis of lysine and meso-diaminopimelic acid, an essential component of bacterial cell walls. The chain is Succinyl-diaminopimelate desuccinylase from Sinorhizobium medicae (strain WSM419) (Ensifer medicae).